The following is a 316-amino-acid chain: Apolipoprotein E (316 aa).

The first 18 residues, 1–18, serve as a signal peptide directing secretion; sequence MKALWAVLVVTLLAGCLA. 8 tandem repeats follow at residues 76–97, 98–119, 120–141, 142–163, 164–185, 186–207, 208–229, and 230–251. The tract at residues 76-251 is 8 X 22 AA approximate tandem repeats; it reads VLMEDTMTEL…RLEEMREQME (176 aa). Methionine 139 is modified (methionine sulfoxide). Serine 143 is subject to Phosphoserine. Residues 154 to 164 are LDL and other lipoprotein receptors binding; that stretch reads HLRKLRKRLMR. 158 to 161 contributes to the heparin binding site; the sequence is LRKR. The lipid-binding and lipoprotein association stretch occupies residues 206-286; that stretch reads TANLGAGAGK…GWFEPLVEDM (81 aa). 225 to 232 is a heparin binding site; sequence GARIRGRL. The tract at residues 262 to 316 is homooligomerization; the sequence is QQMRLQAEIFQARLKGWFEPLVEDMQRQWANLVEKIQASVAANPIPPSSVPQESP. The specificity for association with VLDL stretch occupies residues 274 to 286; it reads RLKGWFEPLVEDM.

This sequence belongs to the apolipoprotein A1/A4/E family. As to quaternary structure, homotetramer. May interact with ABCA1; functionally associated with ABCA1 in the biogenesis of HDLs. May interact with APP/A4 amyloid-beta peptide; the interaction is extremely stable in vitro but its physiological significance is unclear. May interact with MAPT. May interact with MAP2. In the cerebrospinal fluid, interacts with secreted SORL1. Interacts with PMEL; this allows the loading of PMEL luminal fragment on ILVs to induce fibril nucleation. APOE exists as multiple glycosylated and sialylated glycoforms within cells and in plasma. The extent of glycosylation and sialylation are tissue and context specific. Post-translationally, glycated in plasma VLDL. In terms of processing, phosphorylated by FAM20C in the extracellular medium.

The protein resides in the secreted. Its subcellular location is the extracellular space. The protein localises to the extracellular matrix. It localises to the extracellular vesicle. It is found in the endosome. The protein resides in the multivesicular body. In terms of biological role, APOE is an apolipoprotein, a protein associating with lipid particles, that mainly functions in lipoprotein-mediated lipid transport between organs via the plasma and interstitial fluids. APOE is a core component of plasma lipoproteins and is involved in their production, conversion and clearance. Apolipoproteins are amphipathic molecules that interact both with lipids of the lipoprotein particle core and the aqueous environment of the plasma. As such, APOE associates with chylomicrons, chylomicron remnants, very low density lipoproteins (VLDL) and intermediate density lipoproteins (IDL) but shows a preferential binding to high-density lipoproteins (HDL). It also binds a wide range of cellular receptors including the LDL receptor/LDLR, the LDL receptor-related proteins LRP1, LRP2 and LRP8 and the very low-density lipoprotein receptor/VLDLR that mediate the cellular uptake of the APOE-containing lipoprotein particles. Finally, APOE also has a heparin-binding activity and binds heparan-sulfate proteoglycans on the surface of cells, a property that supports the capture and the receptor-mediated uptake of APOE-containing lipoproteins by cells. A main function of APOE is to mediate lipoprotein clearance through the uptake of chylomicrons, VLDLs, and HDLs by hepatocytes. APOE is also involved in the biosynthesis by the liver of VLDLs as well as their uptake by peripheral tissues ensuring the delivery of triglycerides and energy storage in muscle, heart and adipose tissues. By participating in the lipoprotein-mediated distribution of lipids among tissues, APOE plays a critical role in plasma and tissues lipid homeostasis. APOE is also involved in two steps of reverse cholesterol transport, the HDLs-mediated transport of cholesterol from peripheral tissues to the liver, and thereby plays an important role in cholesterol homeostasis. First, it is functionally associated with ABCA1 in the biogenesis of HDLs in tissues. Second, it is enriched in circulating HDLs and mediates their uptake by hepatocytes. APOE also plays an important role in lipid transport in the central nervous system, regulating neuron survival and sprouting. This Peromyscus leucopus (White-footed mouse) protein is Apolipoprotein E (Apoe).